Reading from the N-terminus, the 58-residue chain is Potassium channel toxin alpha-KTx 9.9 (58 aa).

The N-terminal stretch at 1–21 is a signal peptide; the sequence is KKTSRLFTLVLIVLAMNVMMA. Residues 22 to 30 constitute a propeptide that is removed on maturation; the sequence is IISDPVVEA. 3 disulfides stabilise this stretch: C33–C49, C36–C54, and C40–C56.

Belongs to the short scorpion toxin superfamily. Potassium channel inhibitor family. Alpha-KTx 09 subfamily. As to expression, expressed by the venom gland.

Its subcellular location is the secreted. In terms of biological role, potassium channel inhibitor. The chain is Potassium channel toxin alpha-KTx 9.9 from Buthus israelis (Israeli scorpion).